We begin with the raw amino-acid sequence, 608 residues long: Bifunctional dihydrofolate reductase-thymidylate synthase (608 aa).

The region spanning 10 to 228 (DIYAICACCK…TTLDFIIYKK (219 aa)) is the DHFR domain. 14–15 (IC) contributes to the substrate binding site. Position 16 (alanine 16) interacts with NADP(+). Position 31 (valine 31) interacts with substrate. Residue 39 to 45 (GLGNKGV) participates in NADP(+) binding. 2 residues coordinate substrate: aspartate 54 and asparagine 108. NADP(+) contacts are provided by residues 106–108 (RTN), 128–130 (SRT), and asparagine 144. Residues isoleucine 164, tyrosine 170, and threonine 185 each coordinate substrate. 165–172 (GGSVVYQE) serves as a coordination point for NADP(+). The segment at 322–608 (YHPEYQYLNI…HEKISMDMAA (287 aa)) is thymidylate synthase. Arginine 345 is a dUMP binding site. The active site involves cysteine 490. DUMP-binding positions include histidine 491, 509–513 (QRSCD), asparagine 521, and 551–553 (HVY).

In the N-terminal section; belongs to the dihydrofolate reductase family. The protein in the C-terminal section; belongs to the thymidylate synthase family. As to quaternary structure, homodimer.

It catalyses the reaction (6S)-5,6,7,8-tetrahydrofolate + NADP(+) = 7,8-dihydrofolate + NADPH + H(+). It carries out the reaction dUMP + (6R)-5,10-methylene-5,6,7,8-tetrahydrofolate = 7,8-dihydrofolate + dTMP. It participates in cofactor biosynthesis; tetrahydrofolate biosynthesis; 5,6,7,8-tetrahydrofolate from 7,8-dihydrofolate: step 1/1. In terms of biological role, bifunctional enzyme. Involved in de novo dTMP biosynthesis. Key enzyme in folate metabolism. Catalyzes an essential reaction for de novo glycine and purine synthesis, DNA precursor synthesis, and for the conversion of dUMP to dTMP. The sequence is that of Bifunctional dihydrofolate reductase-thymidylate synthase from Plasmodium falciparum (isolate K1 / Thailand).